The chain runs to 237 residues: Sugar fermentation stimulation protein homolog (237 aa).

Belongs to the SfsA family.

In Actinobacillus pleuropneumoniae serotype 5b (strain L20), this protein is Sugar fermentation stimulation protein homolog.